Here is a 112-residue protein sequence, read N- to C-terminus: Chaperone NapD (112 aa).

Belongs to the NapD family. As to quaternary structure, interacts with the cytoplasmic NapA precursor.

Its subcellular location is the cytoplasm. Its function is as follows. Chaperone for NapA, the catalytic subunit of the periplasmic nitrate reductase. It binds directly and specifically to the twin-arginine signal peptide of NapA, preventing premature interaction with the Tat translocase and premature export. This Paracoccus pantotrophus (Thiosphaera pantotropha) protein is Chaperone NapD.